The sequence spans 95 residues: Large ribosomal subunit protein uL23cz/uL23cy (95 aa).

The protein belongs to the universal ribosomal protein uL23 family. Part of the 50S ribosomal subunit.

The protein resides in the plastid. Its subcellular location is the chloroplast. Binds to 23S rRNA. The polypeptide is Large ribosomal subunit protein uL23cz/uL23cy (rpl23-A) (Amborella trichopoda).